Here is a 41-residue protein sequence, read N- to C-terminus: Large ribosomal subunit protein bL36 (41 aa).

The protein belongs to the bacterial ribosomal protein bL36 family.

This chain is Large ribosomal subunit protein bL36, found in Stenotrophomonas maltophilia (strain R551-3).